Reading from the N-terminus, the 362-residue chain is Holliday junction branch migration complex subunit RuvB (362 aa).

Residues 1 to 20 (MKRTIMTNTDTFEQPNTGAN) form a disordered region. The segment at 15–203 (PNTGANEESL…FGFTAHLDFY (189 aa)) is large ATPase domain (RuvB-L). ATP contacts are provided by residues Leu42, Arg43, Gly84, Lys87, Thr88, Thr89, 150-152 (EDF), Arg193, Tyr203, and Arg240. Thr88 provides a ligand contact to Mg(2+). The small ATPAse domain (RuvB-S) stretch occupies residues 204-274 (PHEELEKLIE…DVKEALALYQ (71 aa)). The segment at 277–362 (TEGLDRLDIA…ESAYDVNEMS (86 aa)) is head domain (RuvB-H). Positions 332 and 337 each coordinate DNA.

This sequence belongs to the RuvB family. In terms of assembly, homohexamer. Forms an RuvA(8)-RuvB(12)-Holliday junction (HJ) complex. HJ DNA is sandwiched between 2 RuvA tetramers; dsDNA enters through RuvA and exits via RuvB. An RuvB hexamer assembles on each DNA strand where it exits the tetramer. Each RuvB hexamer is contacted by two RuvA subunits (via domain III) on 2 adjacent RuvB subunits; this complex drives branch migration. In the full resolvosome a probable DNA-RuvA(4)-RuvB(12)-RuvC(2) complex forms which resolves the HJ.

It localises to the cytoplasm. The catalysed reaction is ATP + H2O = ADP + phosphate + H(+). Its function is as follows. The RuvA-RuvB-RuvC complex processes Holliday junction (HJ) DNA during genetic recombination and DNA repair, while the RuvA-RuvB complex plays an important role in the rescue of blocked DNA replication forks via replication fork reversal (RFR). RuvA specifically binds to HJ cruciform DNA, conferring on it an open structure. The RuvB hexamer acts as an ATP-dependent pump, pulling dsDNA into and through the RuvAB complex. RuvB forms 2 homohexamers on either side of HJ DNA bound by 1 or 2 RuvA tetramers; 4 subunits per hexamer contact DNA at a time. Coordinated motions by a converter formed by DNA-disengaged RuvB subunits stimulates ATP hydrolysis and nucleotide exchange. Immobilization of the converter enables RuvB to convert the ATP-contained energy into a lever motion, pulling 2 nucleotides of DNA out of the RuvA tetramer per ATP hydrolyzed, thus driving DNA branch migration. The RuvB motors rotate together with the DNA substrate, which together with the progressing nucleotide cycle form the mechanistic basis for DNA recombination by continuous HJ branch migration. Branch migration allows RuvC to scan DNA until it finds its consensus sequence, where it cleaves and resolves cruciform DNA. The protein is Holliday junction branch migration complex subunit RuvB of Bifidobacterium adolescentis (strain ATCC 15703 / DSM 20083 / NCTC 11814 / E194a).